The following is a 344-amino-acid chain: Isopentenyl-diphosphate delta-isomerase (344 aa).

Residue 9–10 (RK) coordinates substrate. FMN-binding positions include 65 to 67 (AMT), Ser95, and Asn124. Gln154 is a substrate binding site. Glu155 is a binding site for Mg(2+). Residues Lys185, Thr215, 259 to 261 (GVR), and 280 to 281 (SG) each bind FMN.

This sequence belongs to the IPP isomerase type 2 family. As to quaternary structure, homooctamer. Dimer of tetramers. It depends on FMN as a cofactor. NADPH serves as cofactor. The cofactor is Mg(2+).

Its subcellular location is the cytoplasm. The enzyme catalyses isopentenyl diphosphate = dimethylallyl diphosphate. Its function is as follows. Involved in the biosynthesis of isoprenoids. Catalyzes the 1,3-allylic rearrangement of the homoallylic substrate isopentenyl (IPP) to its allylic isomer, dimethylallyl diphosphate (DMAPP). The polypeptide is Isopentenyl-diphosphate delta-isomerase (Lacticaseibacillus casei (strain BL23) (Lactobacillus casei)).